We begin with the raw amino-acid sequence, 385 residues long: ATP synthase subunit a-1 (385 aa).

Positions 1–133 (MRRIFLFDEN…ALNIVGQAAA (133 aa)) are excised as a propeptide. 7 consecutive transmembrane segments (helical) span residues 154-174 (FSFTNSSLFMLLTLSFFLLLI), 220-240 (FFPCILVTFLFLLFCNLQGMI), 249-269 (HFLITLALSFSIFIGITIVGF), 276-296 (FFSFLLPAGVPLPLAPFLVLL), 316-336 (MMAGHSLVKILSGFAWTMLCM), 339-359 (IFYFIGALGPLFIVLALTGLE), and 362-382 (VAILQAYVFTILICIYLNDAI).

Belongs to the ATPase A chain family. F-type ATPases have 2 components, CF(1) - the catalytic core - and CF(0) - the membrane proton channel. CF(1) has five subunits: alpha(3), beta(3), gamma(1), delta(1), epsilon(1). CF(0) has three main subunits: a, b and c.

It is found in the mitochondrion inner membrane. Functionally, mitochondrial membrane ATP synthase (F(1)F(0) ATP synthase or Complex V) produces ATP from ADP in the presence of a proton gradient across the membrane which is generated by electron transport complexes of the respiratory chain. F-type ATPases consist of two structural domains, F(1) - containing the extramembraneous catalytic core and F(0) - containing the membrane proton channel, linked together by a central stalk and a peripheral stalk. During catalysis, ATP synthesis in the catalytic domain of F(1) is coupled via a rotary mechanism of the central stalk subunits to proton translocation. Key component of the proton channel; it may play a direct role in the translocation of protons across the membrane. The polypeptide is ATP synthase subunit a-1 (ATP6-1) (Arabidopsis thaliana (Mouse-ear cress)).